A 312-amino-acid polypeptide reads, in one-letter code: Malate dehydrogenase (312 aa).

Residues 12-17 and aspartate 36 contribute to the NAD(+) site; that span reads GAGFTG. The substrate site is built by arginine 87 and arginine 93. NAD(+) contacts are provided by residues asparagine 100 and 123 to 125; that span reads LTN. Asparagine 125 is a binding site for substrate. Residue serine 149 is modified to Phosphoserine. Arginine 156 contributes to the substrate binding site. Histidine 180 functions as the Proton acceptor in the catalytic mechanism.

Belongs to the LDH/MDH superfamily. MDH type 3 family.

The enzyme catalyses (S)-malate + NAD(+) = oxaloacetate + NADH + H(+). Catalyzes the reversible oxidation of malate to oxaloacetate. The polypeptide is Malate dehydrogenase (Geobacillus thermodenitrificans).